The following is a 262-amino-acid chain: Pyridoxine 5'-phosphate synthase (262 aa).

Asn-6 contributes to the 3-amino-2-oxopropyl phosphate binding site. Residue Asp-8–His-9 participates in 1-deoxy-D-xylulose 5-phosphate binding. Residue Arg-17 participates in 3-amino-2-oxopropyl phosphate binding. Residue His-43 is the Proton acceptor of the active site. 1-deoxy-D-xylulose 5-phosphate is bound by residues Arg-45 and His-50. Glu-70 acts as the Proton acceptor in catalysis. Position 102 (Thr-102) interacts with 1-deoxy-D-xylulose 5-phosphate. The active-site Proton donor is the His-215. Residues Gly-216 and Gly-237–His-238 contribute to the 3-amino-2-oxopropyl phosphate site.

Belongs to the PNP synthase family. Homooctamer; tetramer of dimers.

The protein resides in the cytoplasm. It catalyses the reaction 3-amino-2-oxopropyl phosphate + 1-deoxy-D-xylulose 5-phosphate = pyridoxine 5'-phosphate + phosphate + 2 H2O + H(+). It participates in cofactor biosynthesis; pyridoxine 5'-phosphate biosynthesis; pyridoxine 5'-phosphate from D-erythrose 4-phosphate: step 5/5. Its function is as follows. Catalyzes the complicated ring closure reaction between the two acyclic compounds 1-deoxy-D-xylulose-5-phosphate (DXP) and 3-amino-2-oxopropyl phosphate (1-amino-acetone-3-phosphate or AAP) to form pyridoxine 5'-phosphate (PNP) and inorganic phosphate. This is Pyridoxine 5'-phosphate synthase from Helicobacter pylori (strain Shi470).